The following is a 454-amino-acid chain: Ornithine aminotransferase (454 aa).

Lysine 280 bears the N6-(pyridoxal phosphate)lysine mark.

The protein belongs to the class-III pyridoxal-phosphate-dependent aminotransferase family. Pyridoxal 5'-phosphate serves as cofactor.

It localises to the cytoplasm. The enzyme catalyses a 2-oxocarboxylate + L-ornithine = L-glutamate 5-semialdehyde + an L-alpha-amino acid. The protein operates within amino-acid biosynthesis; L-proline biosynthesis; L-glutamate 5-semialdehyde from L-ornithine: step 1/1. This chain is Ornithine aminotransferase (otaA), found in Emericella nidulans (strain FGSC A4 / ATCC 38163 / CBS 112.46 / NRRL 194 / M139) (Aspergillus nidulans).